The sequence spans 163 residues: Crossover junction endodeoxyribonuclease RuvC (163 aa).

Catalysis depends on residues Asp9, Glu76, and Asp148. Mg(2+) contacts are provided by Asp9, Glu76, and Asp148.

Belongs to the RuvC family. In terms of assembly, homodimer which binds Holliday junction (HJ) DNA. The HJ becomes 2-fold symmetrical on binding to RuvC with unstacked arms; it has a different conformation from HJ DNA in complex with RuvA. In the full resolvosome a probable DNA-RuvA(4)-RuvB(12)-RuvC(2) complex forms which resolves the HJ. Requires Mg(2+) as cofactor.

The protein localises to the cytoplasm. It catalyses the reaction Endonucleolytic cleavage at a junction such as a reciprocal single-stranded crossover between two homologous DNA duplexes (Holliday junction).. The RuvA-RuvB-RuvC complex processes Holliday junction (HJ) DNA during genetic recombination and DNA repair. Endonuclease that resolves HJ intermediates. Cleaves cruciform DNA by making single-stranded nicks across the HJ at symmetrical positions within the homologous arms, yielding a 5'-phosphate and a 3'-hydroxyl group; requires a central core of homology in the junction. The consensus cleavage sequence is 5'-(A/T)TT(C/G)-3'. Cleavage occurs on the 3'-side of the TT dinucleotide at the point of strand exchange. HJ branch migration catalyzed by RuvA-RuvB allows RuvC to scan DNA until it finds its consensus sequence, where it cleaves and resolves the cruciform DNA. This chain is Crossover junction endodeoxyribonuclease RuvC, found in Trichormus variabilis (strain ATCC 29413 / PCC 7937) (Anabaena variabilis).